The chain runs to 100 residues: Carboxysome shell vertex protein CcmL (100 aa).

In terms of domain architecture, BMV spans 1–83; that stretch reads MQIGRVRGTV…VDAVVIGIID (83 aa).

The protein belongs to the CcmL/EutN family. CcmL subfamily. As to quaternary structure, homopentamer. Interacts with full-length CcmM.

The protein localises to the carboxysome. Functionally, probably forms vertices in the carboxysome, a polyhedral inclusion where RuBisCO (ribulose bisphosphate carboxylase, rbcL-rbcS) is sequestered. Has been modeled to induce curvature upon insertion into an otherwise flat hexagonal molecular layer of CcmK subunits. The polypeptide is Carboxysome shell vertex protein CcmL (Gloeobacter violaceus (strain ATCC 29082 / PCC 7421)).